The chain runs to 89 residues: Small ribosomal subunit protein uS15 (89 aa).

It belongs to the universal ribosomal protein uS15 family. As to quaternary structure, part of the 30S ribosomal subunit. Forms a bridge to the 50S subunit in the 70S ribosome, contacting the 23S rRNA.

Its function is as follows. One of the primary rRNA binding proteins, it binds directly to 16S rRNA where it helps nucleate assembly of the platform of the 30S subunit by binding and bridging several RNA helices of the 16S rRNA. In terms of biological role, forms an intersubunit bridge (bridge B4) with the 23S rRNA of the 50S subunit in the ribosome. The polypeptide is Small ribosomal subunit protein uS15 (Cupriavidus metallidurans (strain ATCC 43123 / DSM 2839 / NBRC 102507 / CH34) (Ralstonia metallidurans)).